A 693-amino-acid chain; its full sequence is Guanyl-specific ribonuclease pgl-3 (693 aa).

The tract at residues 205-447 (KKLMIEGPKI…VNRIIESLEK (243 aa)) is involved in dimerization. Histidine 437 serves as the catalytic Proton acceptor. 3 disordered regions span residues 445–468 (LEKS…GPTT), 523–591 (AEKN…DATP), and 620–693 (SSNG…RGGS). Low complexity predominate over residues 447–468 (KSSSSEPSATAKQTTTSNGPTT). 2 stretches are compositionally biased toward polar residues: residues 528–548 (NTPS…SPTK) and 569–580 (ITKVSPQPQERT). The interval 581–614 (GTAWGSGDATPVPLATPVNEYKVSGFGAAPVASG) is required for interaction with sepa-1. Gly residues-rich tracts occupy residues 625–634 (SGRGSYGGGR), 641–660 (RGAY…SRGY), and 668–693 (RGSY…RGGS). Residues 633–693 (GRGGDRGGRG…GFFGGSRGGS (61 aa)) are RNA-binding RGG-box.

In terms of assembly, may form a homodimer. Interacts with pgl-1 and pgl-2; this association is not required for P-granule localization of either pgl-1 or pgl-2. Interacts with sepa-1; the interaction is enhanced in the presence of RNA. Interacts with prmt-1; the interaction is direct. Methylated at arginine residues in the RNA-binding RGG-box by prmt-1. Methylation promotes P-granule degradation by autophagy. In terms of tissue distribution, highly expressed in the germline. Expressed in most somatic cells.

It is found in the cytoplasmic granule. The enzyme catalyses [RNA] containing guanosine + H2O = an [RNA fragment]-3'-guanosine-3'-phosphate + a 5'-hydroxy-ribonucleotide-3'-[RNA fragment].. Guanyl-specific endoribonuclease which cleaves the phosphodiester bond in single-stranded RNA between the 3'-guanylic residue and the 5'-OH residue of adjacent nucleotide, resulting in the formation of a corresponding 2',3'-cyclic phosphate intermediate. P-granule component involved in germline development. Together with the P-granule component pgl-1, is involved in the formation of P-granules. Together with pgl-1, probably recruits other granule components such as pos-1, mex-3 and glh-1, and RNA to P-granules. In vitro, binds mRNA; this interaction is required for the formation of liquid-like droplets that resemble P-granules. Most likely recruits pgl-1 into P-granules during autophagy. Associates with adapters such as sepa-1 and is required for the accumulation and degradation of P-granules by autophagy in somatic cells. This ensures exclusive localization of the P-granules in germ cells. In addition, may act redundantly with pgl-1 to protect germ cells from excessive germline apoptosis during normal oogenesis and development of the two gonadal arms. This may in part be through regulating the localization of sir-2.1 which is involved in germ cell apoptosis. May protect somatic cells from excessive apoptosis during normal development. This Caenorhabditis elegans protein is Guanyl-specific ribonuclease pgl-3.